We begin with the raw amino-acid sequence, 156 residues long: Transcription elongation factor GreA (156 aa).

The stretch at 46–66 (AEYHSAREKQSFIEGRIKELE) forms a coiled coil.

This sequence belongs to the GreA/GreB family.

Its function is as follows. Necessary for efficient RNA polymerase transcription elongation past template-encoded arresting sites. The arresting sites in DNA have the property of trapping a certain fraction of elongating RNA polymerases that pass through, resulting in locked ternary complexes. Cleavage of the nascent transcript by cleavage factors such as GreA or GreB allows the resumption of elongation from the new 3'terminus. GreA releases sequences of 2 to 3 nucleotides. This is Transcription elongation factor GreA from Ruegeria pomeroyi (strain ATCC 700808 / DSM 15171 / DSS-3) (Silicibacter pomeroyi).